Consider the following 466-residue polypeptide: UDP-N-acetylmuramoylalanine--D-glutamate ligase (466 aa).

ATP is bound at residue Gly-121–Thr-127.

It belongs to the MurCDEF family.

It is found in the cytoplasm. It catalyses the reaction UDP-N-acetyl-alpha-D-muramoyl-L-alanine + D-glutamate + ATP = UDP-N-acetyl-alpha-D-muramoyl-L-alanyl-D-glutamate + ADP + phosphate + H(+). Its pathway is cell wall biogenesis; peptidoglycan biosynthesis. Functionally, cell wall formation. Catalyzes the addition of glutamate to the nucleotide precursor UDP-N-acetylmuramoyl-L-alanine (UMA). The polypeptide is UDP-N-acetylmuramoylalanine--D-glutamate ligase (Nitrobacter hamburgensis (strain DSM 10229 / NCIMB 13809 / X14)).